The sequence spans 76 residues: Acyl carrier protein (76 aa).

The Carrier domain occupies 1–76 (MSIEERVKKI…SAIDYVQNNQ (76 aa)). O-(pantetheine 4'-phosphoryl)serine is present on S36.

This sequence belongs to the acyl carrier protein (ACP) family. 4'-phosphopantetheine is transferred from CoA to a specific serine of apo-ACP by AcpS. This modification is essential for activity because fatty acids are bound in thioester linkage to the sulfhydryl of the prosthetic group.

The protein localises to the cytoplasm. Its pathway is lipid metabolism; fatty acid biosynthesis. Carrier of the growing fatty acid chain in fatty acid biosynthesis. The chain is Acyl carrier protein from Haemophilus influenzae (strain 86-028NP).